A 663-amino-acid chain; its full sequence is DNA ligase (663 aa).

NAD(+)-binding positions include Asp33–Asp37, Ser82–Ile83, and Glu112. The active-site N6-AMP-lysine intermediate is the Lys114. Residues Arg135, Glu171, Lys285, and Lys309 each coordinate NAD(+). The Zn(2+) site is built by Cys403, Cys406, Cys419, and Cys424. Residues Asp581 to Ser663 form the BRCT domain.

This sequence belongs to the NAD-dependent DNA ligase family. LigA subfamily. Mg(2+) is required as a cofactor. It depends on Mn(2+) as a cofactor.

The enzyme catalyses NAD(+) + (deoxyribonucleotide)n-3'-hydroxyl + 5'-phospho-(deoxyribonucleotide)m = (deoxyribonucleotide)n+m + AMP + beta-nicotinamide D-nucleotide.. DNA ligase that catalyzes the formation of phosphodiester linkages between 5'-phosphoryl and 3'-hydroxyl groups in double-stranded DNA using NAD as a coenzyme and as the energy source for the reaction. It is essential for DNA replication and repair of damaged DNA. In Chlamydia trachomatis serovar L2 (strain ATCC VR-902B / DSM 19102 / 434/Bu), this protein is DNA ligase.